The sequence spans 377 residues: Compound eye opsin BCRH2 (377 aa).

At methionine 1 to tryptophan 53 the chain is on the extracellular side. An N-linked (GlcNAc...) asparagine glycan is attached at asparagine 3. Residues histidine 54–leucine 78 traverse the membrane as a helical segment. The Cytoplasmic portion of the chain corresponds to phenylalanine 79–asparagine 90. A helical membrane pass occupies residues isoleucine 91–cysteine 115. Residues phenylalanine 116–tyrosine 131 lie on the Extracellular side of the membrane. A disulfide bridge links cysteine 128 with cysteine 205. Residues alanine 132–phenylalanine 151 form a helical membrane-spanning segment. Over aspartate 152–lysine 170 the chain is Cytoplasmic. Residues alanine 171–glycine 194 form a helical membrane-spanning segment. At asparagine 195–serine 218 the chain is on the extracellular side. Residues tyrosine 219–isoleucine 246 form a helical membrane-spanning segment. Residues phenylalanine 247 to lysine 281 are Cytoplasmic-facing. Residues threonine 282–valine 305 traverse the membrane as a helical segment. Residues methionine 306 to threonine 313 are Extracellular-facing. Residues proline 314–serine 338 form a helical membrane-spanning segment. Residue lysine 325 is modified to N6-(retinylidene)lysine. Over histidine 339–alanine 377 the chain is Cytoplasmic.

It belongs to the G-protein coupled receptor 1 family. Opsin subfamily. Phosphorylated on some or all of the serine and threonine residues present in the C-terminal region. Expressed in all of the seven retinular cells (R1-R7) forming the main rhabdom in each ommatidium.

The protein localises to the membrane. Visual pigments are the light-absorbing molecules that mediate vision. They consist of an apoprotein, opsin, covalently linked to cis-retinal. This opsin produces visual pigments with maximal absorption in the blue-green region of the spectrum. The protein is Compound eye opsin BCRH2 of Hemigrapsus sanguineus (Asian shore crab).